The following is a 356-amino-acid chain: S-adenosylmethionine:tRNA ribosyltransferase-isomerase (356 aa).

Belongs to the QueA family. Monomer.

It is found in the cytoplasm. The enzyme catalyses 7-aminomethyl-7-carbaguanosine(34) in tRNA + S-adenosyl-L-methionine = epoxyqueuosine(34) in tRNA + adenine + L-methionine + 2 H(+). The protein operates within tRNA modification; tRNA-queuosine biosynthesis. Transfers and isomerizes the ribose moiety from AdoMet to the 7-aminomethyl group of 7-deazaguanine (preQ1-tRNA) to give epoxyqueuosine (oQ-tRNA). In Serratia proteamaculans (strain 568), this protein is S-adenosylmethionine:tRNA ribosyltransferase-isomerase.